A 446-amino-acid polypeptide reads, in one-letter code: Probable glycine dehydrogenase (decarboxylating) subunit 1 (446 aa).

It belongs to the GcvP family. N-terminal subunit subfamily. As to quaternary structure, the glycine cleavage system is composed of four proteins: P, T, L and H. In this organism, the P 'protein' is a heterodimer of two subunits.

It carries out the reaction N(6)-[(R)-lipoyl]-L-lysyl-[glycine-cleavage complex H protein] + glycine + H(+) = N(6)-[(R)-S(8)-aminomethyldihydrolipoyl]-L-lysyl-[glycine-cleavage complex H protein] + CO2. Its function is as follows. The glycine cleavage system catalyzes the degradation of glycine. The P protein binds the alpha-amino group of glycine through its pyridoxal phosphate cofactor; CO(2) is released and the remaining methylamine moiety is then transferred to the lipoamide cofactor of the H protein. The chain is Probable glycine dehydrogenase (decarboxylating) subunit 1 from Desulfitobacterium hafniense (strain DSM 10664 / DCB-2).